A 582-amino-acid polypeptide reads, in one-letter code: ATP-dependent lipid A-core flippase (582 aa).

6 consecutive transmembrane segments (helical) span residues 27–48, 63–85, 144–168, 170–188, 244–266, and 283–302; these read LVVSTIALVINAAADTYMISLL, FLRILPFMILGLMFVRGLSGFAS, VSIVREGASIIGLLTLMFWNSWQLS, VLIVVAPVVAFAISFVSKR, LVSAQSIADPVIQMIASLALFAV, and TFTVVFSAMFGLMRPLKALT. An ABC transmembrane type-1 domain is found at 28–310; the sequence is VVSTIALVIN…LTSVTSEFQR (283 aa). The 237-residue stretch at 342-578 folds into the ABC transporter domain; it reads VDVKDVTFTY…DGAYAQLHRI (237 aa). 376 to 383 contributes to the ATP binding site; that stretch reads GRSGSGKS.

It belongs to the ABC transporter superfamily. Lipid exporter (TC 3.A.1.106) family. In terms of assembly, homodimer.

The protein resides in the cell inner membrane. The catalysed reaction is ATP + H2O + lipid A-core oligosaccharideSide 1 = ADP + phosphate + lipid A-core oligosaccharideSide 2.. Functionally, involved in lipopolysaccharide (LPS) biosynthesis. Translocates lipid A-core from the inner to the outer leaflet of the inner membrane. Transmembrane domains (TMD) form a pore in the inner membrane and the ATP-binding domain (NBD) is responsible for energy generation. Shows ATPase activity. In Vibrio cholerae serotype O1 (strain ATCC 39315 / El Tor Inaba N16961), this protein is ATP-dependent lipid A-core flippase.